A 465-amino-acid polypeptide reads, in one-letter code: U4/U6 small nuclear ribonucleoprotein PRP4 (465 aa).

7 WD repeats span residues 173-212 (VSTKPISAVSLSTDDMVVATGSWAGDLQVLNSQTLQPLTQ), 216-256 (SHVG…GGLR), 263-302 (GHERRISDVKYHPSGKFIGSASHDMTWRLWDASTHQELLL), 305-344 (GHDKGVFSLSFQCDGSLVCSGGMDSLSMLWDIRSGSKVMT), 347-386 (GHSKPIYTVAWSPNGYQVATGGGDGIINVWDIRKRDEGQL), 391-432 (AHRN…KMGS), and 435-464 (GHTDKIISLDISNNSHFLVSGGWDRSIKLW).

Component of the U4/U6-U5 tri-snRNP complex composed of the U4, U6 and U5 snRNAs and at least PRP3, PRP4, PRP6, PRP8, PRP18, PRP31, PRP38, SNU13, SNU23, SNU66, SNU114, SPP381, SMB1, SMD1, SMD2, SMD3, SMX2, SMX3, LSM2, LSM3, LSM4, LSM5, LSM6, LSM7, LSM8, BRR2 and DIB1.

The protein localises to the nucleus. In terms of biological role, involved in RNA splicing. Is required for the association of U4/U6 snRNP with U5 snRNP in an early step of spliceosome assembly. The protein is U4/U6 small nuclear ribonucleoprotein PRP4 (PRP4) of Saccharomyces cerevisiae (strain ATCC 204508 / S288c) (Baker's yeast).